The sequence spans 1097 residues: U3 small nucleolar RNA-associated protein 22 (1097 aa).

Composition is skewed to basic and acidic residues over residues 1–10 (MNGLKREHES) and 18–27 (KTPETEYDSH). The disordered stretch occupies residues 1–27 (MNGLKREHESSSSQDGSKTPETEYDSH).

Belongs to the NRAP family. Component of the ribosomal small subunit (SSU) processome.

It is found in the nucleus. Its subcellular location is the nucleolus. Functionally, involved in nucleolar processing of pre-18S ribosomal RNA and ribosome assembly. The chain is U3 small nucleolar RNA-associated protein 22 from Schizosaccharomyces pombe (strain 972 / ATCC 24843) (Fission yeast).